The primary structure comprises 559 residues: Estrogen receptor beta (559 aa).

The segment at 1 to 155 (MAVACSPEKD…SSGGKADLHF (155 aa)) is modulating. Positions 128-148 (TSSKSARRRSQENEEGEVSSG) are disordered. NR C4-type zinc fingers lie at residues 156-176 (CAVCHDYASGYHYGVWSCEGC) and 192-216 (CPATNQCTIDKNRRKSCQACRLHKC). The nuclear receptor DNA-binding region spans 156–221 (CAVCHDYASG…RLHKCYNVGM (66 aa)). Residues 243–254 (RLSSQGRTSGPS) are compositionally biased toward polar residues. Residues 243-269 (RLSSQGRTSGPSVLNGPAVGPLNTPQP) are disordered. The NR LBD domain maps to 273–509 (TSKQLIERIM…DLLLEMLDAH (237 aa)). The interval 514–559 (SRLPRRSPQQETVEQCDAPARPHSPGTSGPTNTWTPSCTGGRGEPQ) is disordered. Over residues 538 to 551 (PGTSGPTNTWTPSC) the composition is skewed to polar residues.

The protein belongs to the nuclear hormone receptor family. NR3 subfamily. In terms of assembly, binds DNA as a homodimer. Can form a heterodimer with ER-alpha.

Its subcellular location is the nucleus. Functionally, binds estrogens with an affinity similar to that of ER-alpha, and activates expression of reporter genes containing estrogen response elements (ERE) in an estrogen-dependent manner. The protein is Estrogen receptor beta (esr2) of Sparus aurata (Gilthead sea bream).